Here is a 213-residue protein sequence, read N- to C-terminus: Elongation factor 1-beta (213 aa).

Low complexity predominate over residues 67 to 80 (AGKAPAASGSAAAA). A disordered region spans residues 67-88 (AGKAPAASGSAAAAAEEEDDED).

This sequence belongs to the EF-1-beta/EF-1-delta family. EF-1 is composed of 4 subunits: alpha, beta, delta, and gamma.

In terms of biological role, EF-1-beta and EF-1-delta stimulate the exchange of GDP bound to EF-1-alpha to GTP. This Candida albicans (strain WO-1) (Yeast) protein is Elongation factor 1-beta (EFB1).